An 80-amino-acid polypeptide reads, in one-letter code: Small ribosomal subunit protein bS18A (80 aa).

The protein belongs to the bacterial ribosomal protein bS18 family. In terms of assembly, part of the 30S ribosomal subunit. Forms a tight heterodimer with protein bS6.

Functionally, binds as a heterodimer with protein bS6 to the central domain of the 16S rRNA, where it helps stabilize the platform of the 30S subunit. The sequence is that of Small ribosomal subunit protein bS18A from Rhodococcus jostii (strain RHA1).